The sequence spans 543 residues: Secreted effector protein SptP (543 aa).

Residues 35-139 form a chaperone-binding region; sequence TDKAYVAPEK…FINLIKNKDN (105 aa). The region spanning 162-293 is the Bacterial Rho-GAP domain; the sequence is DVGAESKQPL…TAELEKIKAG (132 aa). Residues 315–543 enclose the Tyrosine-protein phosphatase domain; the sequence is IPINQQTQVK…QAQLLMTTAS (229 aa). The active-site Phosphocysteine intermediate is the cysteine 481.

Forms a complex with SicP.

It localises to the secreted. It is found in the host cytoplasm. The enzyme catalyses O-phospho-L-tyrosyl-[protein] + H2O = L-tyrosyl-[protein] + phosphate. Its function is as follows. Effector proteins function to alter host cell physiology and promote bacterial survival in host tissues. This protein includes tyrosine phosphatase and GTPase activating protein (GAP) activities. After bacterial internalization, GAP mediates the reversal of the cytoskeletal changes induced by SopE. This function is independent of its tyrosine phosphatase activity, which remains unclear. This chain is Secreted effector protein SptP (sptP), found in Salmonella typhi.